We begin with the raw amino-acid sequence, 527 residues long: Zinc finger protein 35 (527 aa).

A globular domain region spans residues 9–221 (MALAPWGPVK…NPKTQLGQKP (213 aa)). The tract at residues 16–38 (PVKVKKEEEEEENFPGQASSQQV) is disordered. Glycyl lysine isopeptide (Lys-Gly) (interchain with G-Cter in SUMO2) cross-links involve residues lysine 20, lysine 21, lysine 99, lysine 117, lysine 125, lysine 144, lysine 158, lysine 189, and lysine 214. 2 consecutive C2H2-type zinc fingers follow at residues 222–244 (FTCSVCGKGFSQSANLVVHQRIH) and 250–272 (FECHECGKAFIQSANLVVHQRIH). Residue lysine 276 forms a Glycyl lysine isopeptide (Lys-Gly) (interchain with G-Cter in SUMO2) linkage. 9 C2H2-type zinc fingers span residues 278 to 300 (YVCSKCGKAFTQSSNLTVHQKIH), 306 to 328 (FKCNECEKAFSYSSQLARHQKVH), 334 to 356 (YECNECGKTFTRSSNLIVHQRIH), 362 to 384 (FACNDCGKAFTQSANLIVHQRSH), 390 to 412 (YECKECGKAFSCFSHLIVHQRIH), 418 to 440 (YDCSECGKAFSQLSCLIVHQRIH), 446 to 468 (YVCNECGKAFTCSSYLLIHQRIH), 474 to 496 (YTCNECGKAFRQRSSLTVHQRTH), and 502 to 524 (YECEKCGAAFISNSHLMRHHRTH).

Belongs to the krueppel C2H2-type zinc-finger protein family.

The protein resides in the nucleus. In terms of biological role, may be involved in transcriptional regulation. Involved in cell differentiation and/or proliferation. The polypeptide is Zinc finger protein 35 (ZNF35) (Homo sapiens (Human)).